A 372-amino-acid polypeptide reads, in one-letter code: Putative aminopeptidase SgcX (372 aa).

2 residues coordinate a divalent metal cation: H67 and D180. The active-site Proton acceptor is E212. E213, D235, and H329 together coordinate a divalent metal cation.

This sequence belongs to the peptidase M42 family. A divalent metal cation is required as a cofactor.

In Salmonella typhi, this protein is Putative aminopeptidase SgcX (sgcX).